The chain runs to 150 residues: Large ribosomal subunit protein bL9 (150 aa).

The protein belongs to the bacterial ribosomal protein bL9 family.

Binds to the 23S rRNA. The sequence is that of Large ribosomal subunit protein bL9 from Neisseria gonorrhoeae.